The primary structure comprises 347 residues: Phosphoribosylformylglycinamidine cyclo-ligase (347 aa).

Belongs to the AIR synthase family.

It is found in the cytoplasm. It catalyses the reaction 2-formamido-N(1)-(5-O-phospho-beta-D-ribosyl)acetamidine + ATP = 5-amino-1-(5-phospho-beta-D-ribosyl)imidazole + ADP + phosphate + H(+). Its pathway is purine metabolism; IMP biosynthesis via de novo pathway; 5-amino-1-(5-phospho-D-ribosyl)imidazole from N(2)-formyl-N(1)-(5-phospho-D-ribosyl)glycinamide: step 2/2. This is Phosphoribosylformylglycinamidine cyclo-ligase from Alcanivorax borkumensis (strain ATCC 700651 / DSM 11573 / NCIMB 13689 / SK2).